Here is a 235-residue protein sequence, read N- to C-terminus: Transmembrane protein 176A (235 aa).

Position 38 is a phosphoserine (serine 38). The next 4 membrane-spanning stretches (helical) occupy residues 55–75, 86–106, 113–133, and 193–213; these read VASWVMQIVLGILSAVLGGFF, SGAAIWTGAVAVLAGAAAFIY, YWALLRTLLTLAAFSTAIAAL, and AMLLGVWILLLLASLTPLWLY.

It belongs to the TMEM176 family. In terms of assembly, interacts with MCOLN2.

Its subcellular location is the membrane. This chain is Transmembrane protein 176A (TMEM176A), found in Homo sapiens (Human).